The sequence spans 289 residues: Nucleotide-binding protein FRAAL4592 (289 aa).

An ATP-binding site is contributed by 13 to 20 (GLSGAGRS). 64 to 67 (DVRG) contributes to the GTP binding site.

It belongs to the RapZ-like family.

Functionally, displays ATPase and GTPase activities. This is Nucleotide-binding protein FRAAL4592 from Frankia alni (strain DSM 45986 / CECT 9034 / ACN14a).